A 103-amino-acid chain; its full sequence is Small ribosomal subunit protein uS10 (103 aa).

The protein belongs to the universal ribosomal protein uS10 family. Part of the 30S ribosomal subunit.

In terms of biological role, involved in the binding of tRNA to the ribosomes. This is Small ribosomal subunit protein uS10 from Clostridioides difficile (strain 630) (Peptoclostridium difficile).